The sequence spans 545 residues: CTP synthase (545 aa).

Residues 1–266 form an amidoligase domain region; sequence MTTNYIFVTG…DDYICKRFSL (266 aa). CTP is bound at residue Ser14. A UTP-binding site is contributed by Ser14. Residues 15–20 and Asp72 each bind ATP; that span reads SLGKGI. Mg(2+) contacts are provided by Asp72 and Glu140. CTP is bound by residues 147–149, 187–192, and Lys223; these read DIE and KTKPTQ. Residues 187–192 and Lys223 each bind UTP; that span reads KTKPTQ. 239-241 lines the ATP pocket; it reads KDV. Residues 291–542 enclose the Glutamine amidotransferase type-1 domain; that stretch reads TIGMVGKYIE…VKAANEHQKR (252 aa). Gly352 lines the L-glutamine pocket. The active-site Nucleophile; for glutamine hydrolysis is Cys379. L-glutamine-binding positions include 380–383, Glu403, and Arg470; that span reads LGMQ. Catalysis depends on residues His515 and Glu517.

Belongs to the CTP synthase family. Homotetramer.

It catalyses the reaction UTP + L-glutamine + ATP + H2O = CTP + L-glutamate + ADP + phosphate + 2 H(+). The enzyme catalyses L-glutamine + H2O = L-glutamate + NH4(+). It carries out the reaction UTP + NH4(+) + ATP = CTP + ADP + phosphate + 2 H(+). The protein operates within pyrimidine metabolism; CTP biosynthesis via de novo pathway; CTP from UDP: step 2/2. Its activity is regulated as follows. Allosterically activated by GTP, when glutamine is the substrate; GTP has no effect on the reaction when ammonia is the substrate. The allosteric effector GTP functions by stabilizing the protein conformation that binds the tetrahedral intermediate(s) formed during glutamine hydrolysis. Inhibited by the product CTP, via allosteric rather than competitive inhibition. Functionally, catalyzes the ATP-dependent amination of UTP to CTP with either L-glutamine or ammonia as the source of nitrogen. Regulates intracellular CTP levels through interactions with the four ribonucleotide triphosphates. This Salmonella newport (strain SL254) protein is CTP synthase.